We begin with the raw amino-acid sequence, 361 residues long: Peptide chain release factor 1 (361 aa).

At Q237 the chain carries N5-methylglutamine. Positions 283 to 296 (VEDEKRRSEEESTR) are enriched in basic and acidic residues. The tract at residues 283–305 (VEDEKRRSEEESTRRNLVSSGDR) is disordered.

It belongs to the prokaryotic/mitochondrial release factor family. In terms of processing, methylated by PrmC. Methylation increases the termination efficiency of RF1.

The protein resides in the cytoplasm. Its function is as follows. Peptide chain release factor 1 directs the termination of translation in response to the peptide chain termination codons UAG and UAA. This Shewanella woodyi (strain ATCC 51908 / MS32) protein is Peptide chain release factor 1.